A 156-amino-acid polypeptide reads, in one-letter code: 6,7-dimethyl-8-ribityllumazine synthase (156 aa).

Residues phenylalanine 23, 57–59 (AYE), and 81–83 (AII) contribute to the 5-amino-6-(D-ribitylamino)uracil site. Position 86–87 (86–87 (GT)) interacts with (2S)-2-hydroxy-3-oxobutyl phosphate. The active-site Proton donor is the histidine 89. Phenylalanine 114 is a binding site for 5-amino-6-(D-ribitylamino)uracil. Arginine 128 contributes to the (2S)-2-hydroxy-3-oxobutyl phosphate binding site.

It belongs to the DMRL synthase family.

It carries out the reaction (2S)-2-hydroxy-3-oxobutyl phosphate + 5-amino-6-(D-ribitylamino)uracil = 6,7-dimethyl-8-(1-D-ribityl)lumazine + phosphate + 2 H2O + H(+). Its pathway is cofactor biosynthesis; riboflavin biosynthesis; riboflavin from 2-hydroxy-3-oxobutyl phosphate and 5-amino-6-(D-ribitylamino)uracil: step 1/2. Its function is as follows. Catalyzes the formation of 6,7-dimethyl-8-ribityllumazine by condensation of 5-amino-6-(D-ribitylamino)uracil with 3,4-dihydroxy-2-butanone 4-phosphate. This is the penultimate step in the biosynthesis of riboflavin. The chain is 6,7-dimethyl-8-ribityllumazine synthase from Helicobacter pylori (strain P12).